Reading from the N-terminus, the 435-residue chain is Adenylosuccinate synthetase (435 aa).

GTP-binding positions include 13-19 (GDEGKGK) and 41-43 (GHT). Asp-14 serves as the catalytic Proton acceptor. 2 residues coordinate Mg(2+): Asp-14 and Gly-41. Residues 14–17 (DEGK), 39–42 (NAGH), Thr-131, Arg-145, Gln-226, Thr-241, and Arg-309 contribute to the IMP site. The Proton donor role is filled by His-42. 305–311 (TVTGRKR) is a binding site for substrate. Residues Arg-311, 337 to 339 (KLD), and 419 to 421 (STG) each bind GTP.

Belongs to the adenylosuccinate synthetase family. Homodimer. It depends on Mg(2+) as a cofactor.

It is found in the cytoplasm. The enzyme catalyses IMP + L-aspartate + GTP = N(6)-(1,2-dicarboxyethyl)-AMP + GDP + phosphate + 2 H(+). Its pathway is purine metabolism; AMP biosynthesis via de novo pathway; AMP from IMP: step 1/2. Its function is as follows. Plays an important role in the de novo pathway of purine nucleotide biosynthesis. Catalyzes the first committed step in the biosynthesis of AMP from IMP. This chain is Adenylosuccinate synthetase, found in Dechloromonas aromatica (strain RCB).